We begin with the raw amino-acid sequence, 159 residues long: Glucosamine 6-phosphate N-acetyltransferase (159 aa).

S2 is modified (N-acetylserine). Residues T28, 86-89 (KIIH), and 98-100 (EDI) contribute to the D-glucosamine 6-phosphate site. The region spanning 28–159 (TTVGTITPES…NAGVEMQIRK (132 aa)) is the N-acetyltransferase domain. Residues 100–102 (IAV) and 108–113 (GQGLGK) each bind acetyl-CoA. D-glucosamine 6-phosphate is bound by residues 129–130 (YK) and D134. 143-145 (YEK) contacts acetyl-CoA. D-glucosamine 6-phosphate is bound at residue R158.

Belongs to the acetyltransferase family. GNA1 subfamily. Homodimer.

The enzyme catalyses D-glucosamine 6-phosphate + acetyl-CoA = N-acetyl-D-glucosamine 6-phosphate + CoA + H(+). It functions in the pathway nucleotide-sugar biosynthesis; UDP-N-acetyl-alpha-D-glucosamine biosynthesis; N-acetyl-alpha-D-glucosamine 1-phosphate from alpha-D-glucosamine 6-phosphate (route I): step 1/2. The polypeptide is Glucosamine 6-phosphate N-acetyltransferase (GNA1) (Saccharomyces cerevisiae (strain ATCC 204508 / S288c) (Baker's yeast)).